A 914-amino-acid polypeptide reads, in one-letter code: NADH-quinone oxidoreductase subunit G (914 aa).

Positions 1 to 83 constitute a 2Fe-2S ferredoxin-type domain; it reads MATIHVDGKE…GTFISIDDSE (83 aa). [2Fe-2S] cluster-binding residues include cysteine 34, cysteine 45, cysteine 48, and cysteine 67. The 40-residue stretch at 83-122 folds into the 4Fe-4S His(Cys)3-ligated-type domain; that stretch reads EAKAFRESVVEWLMTNHPHDCPVCEEGGNCHLQDMTVMTG. Residues histidine 99, cysteine 103, cysteine 106, cysteine 112, cysteine 151, cysteine 154, cysteine 157, cysteine 201, cysteine 228, cysteine 231, cysteine 235, and cysteine 263 each coordinate [4Fe-4S] cluster. A 4Fe-4S Mo/W bis-MGD-type domain is found at 221–277; it reads MQFAPSICQQCSVGCNTSPGERYGELRRIENRYNGSVNHYFMCDRGRFGYGYVNLKD.

The protein belongs to the complex I 75 kDa subunit family. Composed of 13 different subunits. Subunits NuoCD, E, F, and G constitute the peripheral sector of the complex. It depends on [2Fe-2S] cluster as a cofactor. The cofactor is [4Fe-4S] cluster.

The enzyme catalyses a quinone + NADH + 5 H(+)(in) = a quinol + NAD(+) + 4 H(+)(out). In terms of biological role, NDH-1 shuttles electrons from NADH, via FMN and iron-sulfur (Fe-S) centers, to quinones in the respiratory chain. The immediate electron acceptor for the enzyme in this species is believed to be ubiquinone. Couples the redox reaction to proton translocation (for every two electrons transferred, four hydrogen ions are translocated across the cytoplasmic membrane), and thus conserves the redox energy in a proton gradient. The chain is NADH-quinone oxidoreductase subunit G (nuoG) from Yersinia pestis.